A 1451-amino-acid polypeptide reads, in one-letter code: Protein clueless (1451 aa).

2 disordered regions span residues 1 to 101 and 264 to 286; these read MALE…EYAA and KKTRPDSVDCTPPEYVTPGVSEP. Over residues 9–53 the composition is skewed to low complexity; the sequence is NSNATATGDATATKASSKAKENNNTAGGKKNLNPIPSQQNSNQNL. The segment covering 66–75 has biased composition (basic residues); the sequence is GKKKGKKNRN. Ser-270 is subject to Phosphoserine. The 243-residue stretch at 424-666 folds into the Clu domain; the sequence is RAEDAFSSKL…RTFPPDVNFL (243 aa). Disordered stretches follow at residues 722–775, 961–1012, and 1413–1451; these read AKKQ…ESKT, AVSS…SSVS, and ANNNGEAEDADPKDVKEQAQAGTQLTNGEKAAATEATSS. Over residues 748–758 the composition is skewed to basic and acidic residues; it reads GADKTDVKEEK. Residues 969 to 984 are compositionally biased toward basic residues; that stretch reads KKRGNGGKHNKHKSSK. Residues 989 to 1010 show a composition bias toward low complexity; the sequence is QQQQQTTGNQNGSSSGTSNGSS.

It belongs to the CLU family.

The protein localises to the cytoplasm. In terms of biological role, mRNA-binding protein involved in proper cytoplasmic distribution of mitochondria. The chain is Protein clueless from Drosophila yakuba (Fruit fly).